A 235-amino-acid polypeptide reads, in one-letter code: MSKNSKAYREAAEKVDRTKLYTPLEAAKLAKETSSKKQDATVEVAIRLGVDPRKADQMVRGTVNLPHGTGKTARVAVFAVGEKAEQAQAAGADIVGSDDLIEKIQGGFLDFDAAIATPDQMAKVGRIARVLGPRGLMPNPKTGTVTPDVAKAVQDIKGGKINFRVDKQANLHFIIGKASFDETKLAENYGAALDEVLRAKPSSSKGRYLKKVTVSTTTGPGIPVDPSVTRNFTEA.

Belongs to the universal ribosomal protein uL1 family. As to quaternary structure, part of the 50S ribosomal subunit.

Its function is as follows. Binds directly to 23S rRNA. The L1 stalk is quite mobile in the ribosome, and is involved in E site tRNA release. Protein L1 is also a translational repressor protein, it controls the translation of the L11 operon by binding to its mRNA. The chain is Large ribosomal subunit protein uL1 from Mycolicibacterium smegmatis (strain ATCC 700084 / mc(2)155) (Mycobacterium smegmatis).